The chain runs to 589 residues: Proline--tRNA ligase (589 aa).

It belongs to the class-II aminoacyl-tRNA synthetase family. ProS type 1 subfamily. Homodimer.

It localises to the cytoplasm. The catalysed reaction is tRNA(Pro) + L-proline + ATP = L-prolyl-tRNA(Pro) + AMP + diphosphate. Its function is as follows. Catalyzes the attachment of proline to tRNA(Pro) in a two-step reaction: proline is first activated by ATP to form Pro-AMP and then transferred to the acceptor end of tRNA(Pro). As ProRS can inadvertently accommodate and process non-cognate amino acids such as alanine and cysteine, to avoid such errors it has two additional distinct editing activities against alanine. One activity is designated as 'pretransfer' editing and involves the tRNA(Pro)-independent hydrolysis of activated Ala-AMP. The other activity is designated 'posttransfer' editing and involves deacylation of mischarged Ala-tRNA(Pro). The misacylated Cys-tRNA(Pro) is not edited by ProRS. The chain is Proline--tRNA ligase from Gloeobacter violaceus (strain ATCC 29082 / PCC 7421).